The chain runs to 1909 residues: Receptor-type tyrosine-protein phosphatase F (1909 aa).

Residues 1–31 form the signal peptide; it reads MVPNTCTSVPLLPVGLPLLLLLSCIQFSSQA. Residues 32-1266 lie on the Extracellular side of the membrane; the sequence is DSLPNFVRSP…RSVDQPEMLW (1235 aa). 3 Ig-like C2-type domains span residues 35 to 125, 137 to 225, and 233 to 315; these read PNFV…AKLT, PTID…ANLY, and PRFS…AQVS. Cys56 and Cys109 are disulfide-bonded. 68–77 lines the heparin pocket; it reads WMKKGKKVSS. N-linked (GlcNAc...) asparagine glycosylation occurs at Asn119. A disulfide bridge links Cys158 with Cys208. 2 N-linked (GlcNAc...) asparagine glycosylation sites follow: Asn251 and Asn296. Cys254 and Cys299 are joined by a disulfide. 8 consecutive Fibronectin type-III domains span residues 322–412, 417–511, 515–604, 609–706, 711–819, 820–914, 918–1013, and 1014–1098; these read PPTS…TGEQ, PPLH…TQQG, QPSS…TAQS, PPQD…TNED, PPRK…TTGA, VPGK…PEDV, FPLN…TSPA, and FATS…TAPD. The tract at residues 399–418 is disordered; the sequence is GPPSEPVETRTGEQAPSSPP. The N-linked (GlcNAc...) asparagine glycan is linked to Asn721. 2 N-linked (GlcNAc...) asparagine glycosylation sites follow: Asn963 and Asn966. The helical transmembrane segment at 1267–1287 threads the bilayer; it reads VMGPVLAVVLIIIIVIAILLF. Topologically, residues 1288–1909 are cytoplasmic; the sequence is KRKRASPLPK…YLGSFDHYAT (622 aa). 2 consecutive Tyrosine-protein phosphatase domains span residues 1354–1609 and 1641–1900; these read FSQE…LLEA and MELE…ALEY. Residues Asp1518, 1550–1556, and Gln1594 each bind substrate; that span reads CSAGVGR. The active-site Phosphocysteine intermediate is the Cys1550. Residue Cys1841 is the Phosphocysteine intermediate of the active site.

The protein belongs to the protein-tyrosine phosphatase family. Receptor class 2A subfamily.

It localises to the membrane. It catalyses the reaction O-phospho-L-tyrosyl-[protein] + H2O = L-tyrosyl-[protein] + phosphate. Functionally, possible cell adhesion receptor. It possesses an intrinsic protein tyrosine phosphatase activity (PTPase). In terms of biological role, the first PTPase domain has enzymatic activity, while the second one seems to affect the substrate specificity of the first one. This Danio rerio (Zebrafish) protein is Receptor-type tyrosine-protein phosphatase F (ptprf).